The sequence spans 121 residues: Large ribosomal subunit protein uL22 (121 aa).

It belongs to the universal ribosomal protein uL22 family. As to quaternary structure, part of the 50S ribosomal subunit.

In terms of biological role, this protein binds specifically to 23S rRNA; its binding is stimulated by other ribosomal proteins, e.g. L4, L17, and L20. It is important during the early stages of 50S assembly. It makes multiple contacts with different domains of the 23S rRNA in the assembled 50S subunit and ribosome. The globular domain of the protein is located near the polypeptide exit tunnel on the outside of the subunit, while an extended beta-hairpin is found that lines the wall of the exit tunnel in the center of the 70S ribosome. The protein is Large ribosomal subunit protein uL22 of Synechococcus sp. (strain CC9605).